The chain runs to 472 residues: Phosphoenolpyruvate carboxylase (472 aa).

This sequence belongs to the PEPCase type 2 family. Homotetramer. It depends on Mg(2+) as a cofactor.

It catalyses the reaction oxaloacetate + phosphate = phosphoenolpyruvate + hydrogencarbonate. In terms of biological role, catalyzes the irreversible beta-carboxylation of phosphoenolpyruvate (PEP) to form oxaloacetate (OAA), a four-carbon dicarboxylic acid source for the tricarboxylic acid cycle. The polypeptide is Phosphoenolpyruvate carboxylase (Pyrococcus furiosus (strain ATCC 43587 / DSM 3638 / JCM 8422 / Vc1)).